The following is a 503-amino-acid chain: ATP synthase subunit alpha (503 aa).

Position 169–176 (169–176 (GDRQTGKT)) interacts with ATP.

The protein belongs to the ATPase alpha/beta chains family. F-type ATPases have 2 components, CF(1) - the catalytic core - and CF(0) - the membrane proton channel. CF(1) has five subunits: alpha(3), beta(3), gamma(1), delta(1), epsilon(1). CF(0) has three main subunits: a(1), b(2) and c(9-12). The alpha and beta chains form an alternating ring which encloses part of the gamma chain. CF(1) is attached to CF(0) by a central stalk formed by the gamma and epsilon chains, while a peripheral stalk is formed by the delta and b chains.

It is found in the cell membrane. The catalysed reaction is ATP + H2O + 4 H(+)(in) = ADP + phosphate + 5 H(+)(out). In terms of biological role, produces ATP from ADP in the presence of a proton gradient across the membrane. The alpha chain is a regulatory subunit. The chain is ATP synthase subunit alpha from Staphylococcus epidermidis (strain ATCC 35984 / DSM 28319 / BCRC 17069 / CCUG 31568 / BM 3577 / RP62A).